The primary structure comprises 962 residues: Phenylalanine--tRNA ligase beta subunit (962 aa).

Residues 85 to 201 (TIRWCKVRVC…AEVFQGDELS (117 aa)) form the tRNA-binding domain. The 83-residue stretch at 456-538 (TQQSPILLST…RVIGFNRIPS (83 aa)) folds into the B5 domain. Mg(2+) contacts are provided by Asp-516, Asp-522, Glu-525, and Glu-526. Positions 621 to 675 (PDSTHNPDSGSDPIIPTGVTRITEPGSSGVSGPGNVGVKEKCSADTSIEHAPTTR) are insert. The 92-residue stretch at 870-961 (PTSPAATQHL…ASSKFGAIMR (92 aa)) folds into the FDX-ACB domain.

This sequence belongs to the phenylalanyl-tRNA synthetase beta subunit family. Type 1 subfamily. As to quaternary structure, tetramer of two alpha and two beta subunits. Requires Mg(2+) as cofactor.

The protein resides in the cytoplasm. The catalysed reaction is tRNA(Phe) + L-phenylalanine + ATP = L-phenylalanyl-tRNA(Phe) + AMP + diphosphate + H(+). This is Phenylalanine--tRNA ligase beta subunit from Tropheryma whipplei (strain Twist) (Whipple's bacillus).